Reading from the N-terminus, the 607-residue chain is Elongation factor 4 (607 aa).

The 183-residue stretch at 11–193 (SKIRNFSIIA…QIVEKVPAPA (183 aa)) folds into the tr-type G domain. GTP-binding positions include 23-28 (DHGKST) and 140-143 (NKID).

This sequence belongs to the TRAFAC class translation factor GTPase superfamily. Classic translation factor GTPase family. LepA subfamily.

The protein resides in the cell membrane. It carries out the reaction GTP + H2O = GDP + phosphate + H(+). Required for accurate and efficient protein synthesis under certain stress conditions. May act as a fidelity factor of the translation reaction, by catalyzing a one-codon backward translocation of tRNAs on improperly translocated ribosomes. Back-translocation proceeds from a post-translocation (POST) complex to a pre-translocation (PRE) complex, thus giving elongation factor G a second chance to translocate the tRNAs correctly. Binds to ribosomes in a GTP-dependent manner. The sequence is that of Elongation factor 4 from Bacillus cereus (strain B4264).